A 267-amino-acid polypeptide reads, in one-letter code: Mannose-specific lectin 1 (267 aa).

The signal sequence occupies residues 1 to 24 (MAKSLVLSSLLLALLLAAPLASLA). 2 Bulb-type lectin domains span residues 26–136 (NNVL…APNR) and 150–260 (RNVL…SPAR). Cystine bridges form between C54–C76 and C178–C203.

Heterotetramer of 2 domain 1 and 2 domain 2 chains arranged as a dimer of domain 1/domain 2 heterodimers.

Mannose-specific lectin. Has weak agglutinating activity towards trypsin-treated erythrocytes from rabbit but not from human. The polypeptide is Mannose-specific lectin 1 (Crocus vernus (Dutch crocus)).